The primary structure comprises 271 residues: Probable ribosomal RNA small subunit methyltransferase A (271 aa).

The S-adenosyl-L-methionine site is built by H19, L21, G46, E67, D92, and N107.

Belongs to the class I-like SAM-binding methyltransferase superfamily. rRNA adenine N(6)-methyltransferase family. RsmA subfamily.

The protein localises to the cytoplasm. Specifically dimethylates two adjacent adenosines in the loop of a conserved hairpin near the 3'-end of 16S rRNA in the 30S particle. May play a critical role in biogenesis of 30S subunits. This chain is Probable ribosomal RNA small subunit methyltransferase A, found in Methanosarcina mazei (strain ATCC BAA-159 / DSM 3647 / Goe1 / Go1 / JCM 11833 / OCM 88) (Methanosarcina frisia).